The chain runs to 505 residues: ATP synthase subunit alpha (505 aa).

ATP is bound at residue 170 to 177; it reads GDRQTGKS.

This sequence belongs to the ATPase alpha/beta chains family. In terms of assembly, F-type ATPases have 2 components, CF(1) - the catalytic core - and CF(0) - the membrane proton channel. CF(1) has five subunits: alpha(3), beta(3), gamma(1), delta(1), epsilon(1). CF(0) has four main subunits: a(1), b(1), b'(1) and c(9-12).

It localises to the cellular thylakoid membrane. The catalysed reaction is ATP + H2O + 4 H(+)(in) = ADP + phosphate + 5 H(+)(out). Functionally, produces ATP from ADP in the presence of a proton gradient across the membrane. The alpha chain is a regulatory subunit. The sequence is that of ATP synthase subunit alpha from Prochlorococcus marinus (strain MIT 9215).